The primary structure comprises 211 residues: Putative hydrolase SMU_367 (211 aa).

The signal sequence occupies residues 1–29; that stretch reads MKKQFLEKAVFTVAATAATVVLGNKMADA. One can recognise a LysM domain in the interval 30–74; it reads DTYTLQEGDSFFSVAQRYHMDAYELASMNGKDITSLILPGQTLTV. Residues 77–101 form a disordered region; sequence SAAPDNQAAAPTDTTQATTETNDAN. Residues 78–101 show a composition bias toward low complexity; that stretch reads AAPDNQAAAPTDTTQATTETNDAN. One can recognise a Peptidase C51 domain in the interval 85–209; it reads AAPTDTTQAT…GTPGSVSYIY (125 aa).

This is Putative hydrolase SMU_367 from Streptococcus mutans serotype c (strain ATCC 700610 / UA159).